The following is a 287-amino-acid chain: Type 1 encapsulin shell protein EncA (287 aa).

This sequence belongs to the encapsulin family. Family 1 subfamily. In terms of assembly, the 32 nm encapsulin nanocompartment is formed by 180 subunits; monomers form pentamers which assemble to form shells. There are 36 pores where the pentamers meet as well as 3-fold axis channels and dimer channels. The N-terminus of the protein is inside the shell.

Its subcellular location is the encapsulin nanocompartment. Shell component of a type 1, iron-storage encapsulin nanocompartment. Encapsulin nanocompartments are 32 nm in diameter with an iron- and phosphorus-rich core (4Fe:1P) about 24 nm in diameter. Upon expression in E.coli most particles are 32 nm, 20% are 18 nm. The core is filled with an average of 14 dense granules, 5-6 nm in diameter that are not evenly distributed. Each nanocompartment is estimated to hold 30,000-35,000 Fe atoms. The minor proteins EncB, EncC and EncD probably lie against the interior face of the nanocompartment. The polypeptide is Type 1 encapsulin shell protein EncA (Myxococcus xanthus (strain DK1622)).